The following is a 231-amino-acid chain: MLMFTAIQRGVWVALLWPHLLTASMPLDCREENGNLSRCPTISQEKLLDRVIQHAELIYRVSEESCSLFEEMFVPFPLQLQRNQAGFTCITKALAIPSSKSEIQQISDKWLLHSVLMLVQSWIEPLVYLQNTLDRYDGAPDMLLNKTKWVSEKLISLEQGVVVLIKKMLDEGMATTAYNEQSLFQDDAQPDMLESVMRDYTLLSCFKKDAHKMEILLKLLKCRQNDIYSCA.

The N-terminal stretch at 1–24 (MLMFTAIQRGVWVALLWPHLLTAS) is a signal peptide. 3 cysteine pairs are disulfide-bonded: cysteine 29–cysteine 39, cysteine 89–cysteine 205, and cysteine 222–cysteine 230. N-linked (GlcNAc...) asparagine glycans are attached at residues asparagine 35 and asparagine 145.

Belongs to the somatotropin/prolactin family. Pituitary gland.

The protein localises to the secreted. This Siganus guttatus (Orange-spotted spinefoot) protein is Somatolactin.